A 421-amino-acid polypeptide reads, in one-letter code: D-amino acid dehydrogenase (421 aa).

3–17 lines the FAD pocket; that stretch reads VLILGSGVIGVTSAY.

This sequence belongs to the DadA oxidoreductase family. FAD serves as cofactor.

It catalyses the reaction a D-alpha-amino acid + A + H2O = a 2-oxocarboxylate + AH2 + NH4(+). Functionally, oxidative deamination of D-amino acids. This Bradyrhizobium diazoefficiens (strain JCM 10833 / BCRC 13528 / IAM 13628 / NBRC 14792 / USDA 110) protein is D-amino acid dehydrogenase.